Consider the following 288-residue polypeptide: Very-long-chain (3R)-3-hydroxyacyl-CoA dehydratase 1 (288 aa).

Residues 1–59 (MGRLTEAAAAGGGASAARSAGPPPAPLPLSSTSPGCAAAMASSEEDGTNGGASEASDER) form a disordered region. The Cytoplasmic portion of the chain corresponds to 1-75 (MGRLTEAAAA…RRLGLLATIW (75 aa)). The chain crosses the membrane as a helical span at residues 76-95 (LTFYNIAMTAGWLVLAIAMV). Over 96–114 (RFYMEKGTHKGLYKSIQKT) the chain is Lumenal. Residues 115 to 131 (LKFFQTFALLEIVHCLI) form a helical membrane-spanning segment. At 132 to 141 (GIVPTSVLVA) the chain is on the cytoplasmic side. The helical transmembrane segment at 142–159 (GVQVSSRIFMVWLVTHSI) threads the bilayer. The Lumenal segment spans residues 160-165 (KPIQNE). Residues 166–180 (ESVVLFLVAWTVTEI) form a helical membrane-spanning segment. Residues 181-203 (TRYSFYTFSLLDHLPYFIKWARY) lie on the Cytoplasmic side of the membrane. Residues 204 to 221 (NFFIILYPVGVAGELLTI) form a helical membrane-spanning segment. Catalysis depends on residues tyrosine 210 and glutamate 217. Over 222–251 (YAALPYVKKTGMFSIRLPNKYNVSFDYYYF) the chain is Lumenal. The N-linked (GlcNAc...) asparagine glycan is linked to asparagine 243. The helical transmembrane segment at 252-269 (LLITMASYIPLFPQLYFH) threads the bilayer. Residues 270–288 (MLRQRRKVLHGEVIVEKDD) lie on the Cytoplasmic side of the membrane.

The protein belongs to the very long-chain fatty acids dehydratase HACD family. In terms of assembly, may interact with enzymes of the ELO family (including ELOVL1); with those enzymes that mediate condensation, the first of the four steps of the reaction cycle responsible for fatty acids elongation, may be part of a larger fatty acids elongase complex. Interacts with TECR. Post-translationally, N-glycosylated. As to expression, expressed in heart.

The protein localises to the endoplasmic reticulum membrane. The catalysed reaction is a very-long-chain (3R)-3-hydroxyacyl-CoA = a very-long-chain (2E)-enoyl-CoA + H2O. It catalyses the reaction (3R)-hydroxyhexadecanoyl-CoA = (2E)-hexadecenoyl-CoA + H2O. It carries out the reaction (3R)-hydroxyoctadecanoyl-CoA = (2E)-octadecenoyl-CoA + H2O. The enzyme catalyses (3R)-hydroxyeicosanoyl-CoA = (2E)-eicosenoyl-CoA + H2O. The catalysed reaction is (3R)-hydroxydocosanoyl-CoA = (2E)-docosenoyl-CoA + H2O. It catalyses the reaction (3R)-hydroxytetracosanoyl-CoA = (2E)-tetracosenoyl-CoA + H2O. It carries out the reaction (3R)-hydroxyhexacosanoyl-CoA = (2E)-hexacosenoyl-CoA + H2O. It participates in lipid metabolism; fatty acid biosynthesis. In terms of biological role, catalyzes the third of the four reactions of the long-chain fatty acids elongation cycle. This endoplasmic reticulum-bound enzymatic process, allows the addition of two carbons to the chain of long- and very long-chain fatty acids/VLCFAs per cycle. This enzyme catalyzes the dehydration of the 3-hydroxyacyl-CoA intermediate into trans-2,3-enoyl-CoA, within each cycle of fatty acid elongation. Thereby, it participates in the production of VLCFAs of different chain lengths that are involved in multiple biological processes as precursors of membrane lipids and lipid mediators. The sequence is that of Very-long-chain (3R)-3-hydroxyacyl-CoA dehydratase 1 (HACD1) from Ovis aries (Sheep).